The primary structure comprises 514 residues: Type-2 serine--tRNA ligase (514 aa).

Residue Ala313 coordinates L-serine. Cys315 is a Zn(2+) binding site. L-serine is bound at residue Arg344. ATP contacts are provided by residues 344 to 346 (RWE) and 355 to 356 (RV). L-serine is bound at residue 361–363 (RGE). Residues Glu363 and Cys470 each contribute to the Zn(2+) site. Arg477 contacts ATP.

This sequence belongs to the class-II aminoacyl-tRNA synthetase family. Type-2 seryl-tRNA synthetase subfamily. In terms of assembly, homodimer. Zn(2+) serves as cofactor.

Its subcellular location is the cytoplasm. It carries out the reaction tRNA(Ser) + L-serine + ATP = L-seryl-tRNA(Ser) + AMP + diphosphate + H(+). The enzyme catalyses tRNA(Sec) + L-serine + ATP = L-seryl-tRNA(Sec) + AMP + diphosphate + H(+). It functions in the pathway aminoacyl-tRNA biosynthesis; selenocysteinyl-tRNA(Sec) biosynthesis; L-seryl-tRNA(Sec) from L-serine and tRNA(Sec): step 1/1. In terms of biological role, catalyzes the attachment of serine to tRNA(Ser). Is also able to aminoacylate tRNA(Sec) with serine, to form the misacylated tRNA L-seryl-tRNA(Sec), which will be further converted into selenocysteinyl-tRNA(Sec). The polypeptide is Type-2 serine--tRNA ligase (Methanococcus maripaludis (strain C5 / ATCC BAA-1333)).